The following is a 27-amino-acid chain: MKIILWAVLIIFLIGLLVVTGVFKMIF.

Residues isoleucine 3–phenylalanine 23 traverse the membrane as a helical segment.

The protein resides in the cell inner membrane. This is an uncharacterized protein from Escherichia coli (strain K12).